A 351-amino-acid polypeptide reads, in one-letter code: Terpene cyclase sdgD (351 aa).

9 consecutive transmembrane segments (helical) span residues isoleucine 7 to isoleucine 27, threonine 62 to isoleucine 82, leucine 89 to leucine 109, tryptophan 126 to isoleucine 146, isoleucine 160 to leucine 180, valine 193 to serine 213, isoleucine 229 to leucine 249, phenylalanine 281 to tyrosine 301, and leucine 316 to tryptophan 336.

It belongs to the membrane-bound ascI terpene cyclase family.

It is found in the membrane. It participates in secondary metabolite biosynthesis. Its function is as follows. Epoxide hydrolase; part of the gene cluster that mediates the biosynthesis of the polyenes aspernidgulenes. The carbon backbone of aspernidgulenes is synthesized by the HR-PKS sdgA, which accepts acetyl-CoA as the starter unit and performs malonyl-CoA extensions as well as regioselective methylation and reduction. The resulting nonaketide offloads the HR-PKS by intramolecular lactonization to yield the 5,6-dihydro-alpha-pyrone-containing hexaenoic acids preaspernidgulene A1 and A2. The FAD-dependent monooxygenase sdgC then installs the first epoxide on the penultimate double bond. Subsequently, the FAD-dependent monooxygenase sdgF presumably generates a ketone intermediate through Meinwald rearrangement involving a hydride shift. Next, sdgC introduces another epoxide on the last olefin of the ketone intermediate after E/Z isomerization. The epoxide hydrolase sdgD then catalyzes stereospecific cyclization of the 5,6-dihydro-alpha-pyrone and opening of the epoxide ring to form an oxygenated trimethylcyclopentanone and an oxabicyclo[2.2.1]heptane unit. Finally, the bicyclic unit undergoes hydrolytic cleavage, either spontaneously or catalyzed by sdgD, to assemble the dimethyl-gamma-lactone moiety in aspernidgulene A1. The protein is Terpene cyclase sdgD of Emericella nidulans (strain FGSC A4 / ATCC 38163 / CBS 112.46 / NRRL 194 / M139) (Aspergillus nidulans).